Here is a 359-residue protein sequence, read N- to C-terminus: Trans-enoyl reductase mpsG (359 aa).

Y212, L259, and T278 together coordinate NADP(+).

Belongs to the zinc-containing alcohol dehydrogenase family. In terms of assembly, monomer.

The protein operates within secondary metabolite biosynthesis. Functionally, trans-enoyl reductase; part of the gene cluster that mediates the biosynthesis of macrophasetins, 3-decalinoyltetramic acids (DTAs) which feature a tetramate (pyrrolidine-2,4-dione) unit connected to a decalin fragment and that have potent bioactivities. The PKS-NRPS mpsA together with its associated enoylreductase partner mpsG incorporate one unit of acetyl-CoA, seven units of malonyl-CoA, and one unit of L-alanine to assemble the linear tetramic acid intermediate corresponding to the backbone of macrophasetins. Without the Diels-Alderase mpsD, the mpsA/G product can undergo the non-enzymatic intramolecular Diels-Alder (IMDA) reaction to generate both macrophasetin A and macrophasetin B. Catalyzed by mpsD, the linear tetramic acid intermediate is thoroughly converted to macrophasetin A via the endo-IMDA reaction in a regioselective and stereoselective manner. Finally, the cytochrome P450 monooxygenase mpsF catalyzes the hydroxylation at C20 to yield the end product macrophasetin C. The protein is Trans-enoyl reductase mpsG of Macrophomina phaseolina (strain MS6) (Charcoal rot fungus).